The sequence spans 439 residues: Ectonucleotide pyrophosphatase/phosphodiesterase family member 7 (439 aa).

The first 21 residues, 1–21 (MGHSAVLLSVALVILPACVTG), serve as a signal peptide directing secretion. At 22–422 (GPVQRQQQHK…RSGSPLSRQH (401 aa)) the chain is on the extracellular side. Asp-38 and Thr-74 together coordinate Zn(2+). The interval 71 to 77 (VTMTSPC) is required for enzyme activity. The active-site Nucleophile is the Thr-74. Asn-95 lines the substrate pocket. 4 N-linked (GlcNAc...) asparagine glycosylation sites follow: Asn-99, Asn-120, Asn-145, and Asn-167. Residues Asp-198, His-202, Asp-245, and His-246 each coordinate Zn(2+). The N-linked (GlcNAc...) asparagine glycan is linked to Asn-266. His-352 contributes to the Zn(2+) binding site. The chain crosses the membrane as a helical span at residues 423 to 439 (HLVVVLMGILTGLAKVV).

It belongs to the nucleotide pyrophosphatase/phosphodiesterase family. It depends on Zn(2+) as a cofactor. In terms of processing, N-glycosylated; required for activity and transport to the plasma membrane. In terms of tissue distribution, detected in small intestine (at protein level). Highly expressed in the jejunum.

It localises to the cell membrane. The enzyme catalyses a sphingomyelin + H2O = phosphocholine + an N-acylsphing-4-enine + H(+). It carries out the reaction a 1-O-alkyl-2-acetyl-sn-glycero-3-phosphocholine + H2O = a 1-O-alkyl-2-acetyl-sn-glycerol + phosphocholine + H(+). The catalysed reaction is 1-O-octadecyl-2-acetyl-sn-glycero-3-phosphocholine + H2O = 1-O-octadecyl-2-acetyl-sn-glycerol + phosphocholine + H(+). It catalyses the reaction 1-hexadecanoyl-sn-glycero-3-phosphocholine + H2O = 1-hexadecanoyl-sn-glycerol + phosphocholine + H(+). Platelet-activating factor hydrolysis is inhibited by higher amount of sphingomyelin. The hydrolysis of platelet-activating factor and sphingomyelin can be inhibited by the presence of sphingomyelin and platelet-activating factor respectively, the inhibition of platelet-activating factor hydrolysis by sphingomyelin being stronger. PAF hydrolysis is dose-dependently increased by both taurocholate (TC) and taurodeoxycholate (TDC). Hydrolase activity against PAF is inhibited by EDTA and stimulated by 0.1-0.25 mM Zn2+. Its function is as follows. Choline-specific phosphodiesterase that hydrolyzes sphingomyelin (SM) releasing the ceramide and phosphocholine and therefore is involved in sphingomyelin digestion, ceramide formation, and fatty acid (FA) absorption in the gastrointestinal tract. Also has phospholipase C activity and can also cleave phosphocholine from palmitoyl lyso-phosphatidylcholine and platelet-activating factor (PAF) leading to its inactivation. Does not have nucleotide pyrophosphatase activity. May promote cholesterol absorption by affecting the levels of sphingomyelin derived from either diet or endogenous sources, in the intestinal lumen. The polypeptide is Ectonucleotide pyrophosphatase/phosphodiesterase family member 7 (Rattus norvegicus (Rat)).